A 350-amino-acid polypeptide reads, in one-letter code: tRNA-splicing endonuclease (350 aa).

Catalysis depends on residues tyrosine 286, histidine 297, and lysine 328.

Belongs to the tRNA-intron endonuclease family. Archaeal long subfamily. Homodimer.

The enzyme catalyses pretRNA = a 3'-half-tRNA molecule with a 5'-OH end + a 5'-half-tRNA molecule with a 2',3'-cyclic phosphate end + an intron with a 2',3'-cyclic phosphate and a 5'-hydroxyl terminus.. In terms of biological role, endonuclease that removes tRNA introns. Cleaves pre-tRNA at the 5'- and 3'-splice sites to release the intron. The products are an intron and two tRNA half-molecules bearing 2',3' cyclic phosphate and 5'-OH termini. Recognizes a pseudosymmetric substrate in which 2 bulged loops of 3 bases are separated by a stem of 4 bp. The chain is tRNA-splicing endonuclease from Methanosarcina acetivorans (strain ATCC 35395 / DSM 2834 / JCM 12185 / C2A).